A 377-amino-acid chain; its full sequence is Nitric oxide reductase FlRd-NAD(+) reductase (377 aa).

This sequence belongs to the FAD-dependent oxidoreductase family. FAD is required as a cofactor.

Its subcellular location is the cytoplasm. It carries out the reaction 2 reduced [nitric oxide reductase rubredoxin domain] + NAD(+) + H(+) = 2 oxidized [nitric oxide reductase rubredoxin domain] + NADH. Its pathway is nitrogen metabolism; nitric oxide reduction. Its function is as follows. One of at least two accessory proteins for anaerobic nitric oxide (NO) reductase. Reduces the rubredoxin moiety of NO reductase. This chain is Nitric oxide reductase FlRd-NAD(+) reductase, found in Salmonella gallinarum (strain 287/91 / NCTC 13346).